The primary structure comprises 303 residues: Pseudouridine-5'-phosphate glycosidase (303 aa).

Glu-25 acts as the Proton donor in catalysis. The substrate site is built by Lys-87 and Val-107. Asp-139 serves as a coordination point for Mn(2+). Residue 141-143 coordinates substrate; that stretch reads SAD. Catalysis depends on Lys-160, which acts as the Nucleophile.

The protein belongs to the pseudouridine-5'-phosphate glycosidase family. In terms of assembly, homotrimer. It depends on Mn(2+) as a cofactor.

The catalysed reaction is D-ribose 5-phosphate + uracil = psi-UMP + H2O. Catalyzes the reversible cleavage of pseudouridine 5'-phosphate (PsiMP) to ribose 5-phosphate and uracil. Functions biologically in the cleavage direction, as part of a pseudouridine degradation pathway. This is Pseudouridine-5'-phosphate glycosidase from Hahella chejuensis (strain KCTC 2396).